The primary structure comprises 625 residues: Dopamine beta-hydroxylase (625 aa).

Residues 1 to 9 (MQVPSPSAR) lie on the Cytoplasmic side of the membrane. Residues 10–30 (EAASMYGTAVAVFLVLLVAVL) traverse the membrane as a helical; Signal-anchor for type II membrane protein segment. Residues 31–625 (QGLAPPESPL…TVVNIGGGKV (595 aa)) are Intragranular-facing. A DOMON domain is found at 50-166 (GDLELSWDVS…GTVHLVYGVL (117 aa)). 6 disulfide bridges follow: cysteine 147/cysteine 604, cysteine 224/cysteine 275, cysteine 261/cysteine 287, cysteine 382/cysteine 495, cysteine 386/cysteine 573, and cysteine 458/cysteine 480. N-linked (GlcNAc...) asparagine glycosylation occurs at asparagine 177. Residue tyrosine 222 is part of the active site. Histidine 254 and histidine 255 together coordinate Cu(2+). Residue asparagine 315 is glycosylated (N-linked (GlcNAc...) asparagine). 4 residues coordinate Cu(2+): histidine 325, histidine 404, histidine 406, and methionine 479. Histidine 404 is an active-site residue. N-linked (GlcNAc...) asparagine glycosylation is present at asparagine 574.

The protein belongs to the copper type II ascorbate-dependent monooxygenase family. As to quaternary structure, homotetramer; composed of two disulfide-linked dimers. The cofactor is Cu(2+). Post-translationally, proteolytic cleavage after the membrane-anchor leads to the release of the soluble form. In terms of processing, N-glycosylated.

The protein resides in the cytoplasmic vesicle. Its subcellular location is the secretory vesicle lumen. It localises to the secretory vesicle. The protein localises to the chromaffin granule lumen. It is found in the secreted. The protein resides in the secretory vesicle membrane. Its subcellular location is the chromaffin granule membrane. It carries out the reaction dopamine + 2 L-ascorbate + O2 = (R)-noradrenaline + 2 monodehydro-L-ascorbate radical + H2O. It participates in catecholamine biosynthesis; (R)-noradrenaline biosynthesis; (R)-noradrenaline from dopamine: step 1/1. Its function is as follows. Catalyzes the hydroxylation of dopamine to noradrenaline (also known as norepinephrine), and is thus vital for regulation of these neurotransmitters. In Canis lupus familiaris (Dog), this protein is Dopamine beta-hydroxylase (DBH).